Consider the following 294-residue polypeptide: MSDILTRVISENGKTFGIACDTTALVNEACRKHDVGPLAAVALGRALTGSILMGALLKGDQYLQLKFEGNGPLGKIITEASPDGWCRGYIANPHAELPLLNGRLDVAGGVGHAGLLSVTKDIGMKQKYQGTSHLVSSEIGEDIAYYLTTSEQVPSAVGLGIQLNPNGTIDAAGGFLIQSLPPADEELIASMEEVIANLPSISSMILDGQSPRQMLDKLFGAIPHKETGNSKLKYQCSCSREKMENALISLGAADLASLLTERGEAEVLCEFCRQNYHFAGKDLQEIIDRLKNIQ.

Cystine bridges form between Cys236–Cys238 and Cys269–Cys272.

This sequence belongs to the HSP33 family. In terms of processing, under oxidizing conditions two disulfide bonds are formed involving the reactive cysteines. Under reducing conditions zinc is bound to the reactive cysteines and the protein is inactive.

It is found in the cytoplasm. In terms of biological role, redox regulated molecular chaperone. Protects both thermally unfolding and oxidatively damaged proteins from irreversible aggregation. Plays an important role in the bacterial defense system toward oxidative stress. The protein is 33 kDa chaperonin of Desulfotalea psychrophila (strain LSv54 / DSM 12343).